The chain runs to 141 residues: Organic hydroperoxide resistance protein-like 1 (141 aa).

A disordered region spans residues 1 to 20 (MAVNYETKATNTGGRNGHVQ).

This sequence belongs to the OsmC/Ohr family.

The sequence is that of Organic hydroperoxide resistance protein-like 1 from Staphylococcus saprophyticus subsp. saprophyticus (strain ATCC 15305 / DSM 20229 / NCIMB 8711 / NCTC 7292 / S-41).